We begin with the raw amino-acid sequence, 266 residues long: Bax inhibitor 1 (266 aa).

Residues 1–22 (MPANYQSVPQDDPSVPNLAQAP) form a disordered region. Helical transmembrane passes span 70-90 (LFVTSLFGGIFYLHPAFSFWV), 92-112 (MHPWFLILNFFISLVVLFGLI), 123-143 (IFLFLFTALEGLTLGTAITFF), 147-167 (IILEAVFITLGVFVALTAFTF), 177-197 (GGFLYVSLWSLILTPLIFFFV), 201-221 (PFIDMAFAGFGTLVFCGYILF), and 240-260 (LMLYLDFINLFIRILQILGML).

The protein belongs to the BI1 family. LFG subfamily.

It localises to the endoplasmic reticulum membrane. Its subcellular location is the mitochondrion membrane. The protein localises to the golgi apparatus membrane. The protein resides in the vacuole membrane. Functionally, links the unfolded protein response and programmed cell death and mediates mitochondrial-dependent apoptosis. Induces cell death and disruption of the mitochondrial transmembrane potential. This Schizosaccharomyces pombe (strain 972 / ATCC 24843) (Fission yeast) protein is Bax inhibitor 1 (bxi1).